Reading from the N-terminus, the 1065-residue chain is Outer capsid protein VP3 (1065 aa).

It localises to the virion. It carries out the reaction a 5'-end diphospho-ribonucleoside in mRNA + GTP + H(+) = a 5'-end (5'-triphosphoguanosine)-ribonucleoside in mRNA + diphosphate. The enzyme catalyses a 5'-end (5'-triphosphoguanosine)-ribonucleoside in mRNA + S-adenosyl-L-methionine = a 5'-end (N(7)-methyl 5'-triphosphoguanosine)-ribonucleoside in mRNA + S-adenosyl-L-homocysteine. Functionally, outer capsid protein involved in mRNA capping. Catalyzes the last 3 enzymatic activities for formation of the 5' cap structure on the viral plus-strand transcripts, namely the RNA guanylyltransferase, RNA-7N- and RNA-2'O-methyltransferase activities. This is Outer capsid protein VP3 (S3) from Cryphonectria parasitica mycoreovirus 1 (strain 9B21) (CpMYRV-1).